An 83-amino-acid chain; its full sequence is RNA-binding protein Hfq (83 aa).

In terms of domain architecture, Sm spans 11 to 71 (DVFLNYIRKN…ISTIMPASPV (61 aa)).

This sequence belongs to the Hfq family. As to quaternary structure, homohexamer.

Functionally, RNA chaperone that binds small regulatory RNA (sRNAs) and mRNAs to facilitate mRNA translational regulation in response to envelope stress, environmental stress and changes in metabolite concentrations. Also binds with high specificity to tRNAs. The polypeptide is RNA-binding protein Hfq (Rhodospirillum rubrum (strain ATCC 11170 / ATH 1.1.1 / DSM 467 / LMG 4362 / NCIMB 8255 / S1)).